The sequence spans 315 residues: Olfactory receptor 3A3 (315 aa).

Residues 1 to 28 are Extracellular-facing; it reads MESEAGTNRTAVAEFMLLGLVQTEEMQS. N-linked (GlcNAc...) asparagine glycosylation is present at Asn8. Residues 29–52 traverse the membrane as a helical segment; that stretch reads VIFVLLLFAYLVTTGGNLSILAAI. At 53-60 the chain is on the cytoplasmic side; it reads LVEPKLHT. A helical membrane pass occupies residues 61-82; it reads PMYFFLGNLSVLDVGCITVTVP. Over 83–103 the chain is Extracellular; it reads AMLGRLLSHKSTISYDACLSQ. Cys100 and Cys192 form a disulfide bridge. The helical transmembrane segment at 104–123 threads the bilayer; that stretch reads LFFFHLLAGMDCFLLTAMAY. At 124 to 143 the chain is on the cytoplasmic side; that stretch reads DRFLAICRPLTYSTHMNQRV. Residues 144–161 traverse the membrane as a helical segment; it reads QRMLVAVSWTCAFTNALT. The Extracellular segment spans residues 162-199; sequence HTIALTTLNFCGPSVINHFYCDLPQLFQLSCSSTQLNE. Residues 200-222 form a helical membrane-spanning segment; that stretch reads LLLFVAAAVMAVAPLVFISVSYA. The Cytoplasmic segment spans residues 223–239; sequence HVVAAVLQIHSAEGRKK. A helical transmembrane segment spans residues 240-262; it reads AFSTCGSHLTVVGIFYGTGVFSY. Topologically, residues 263–275 are extracellular; it reads MRLGSVESSDKDK. Residues 276 to 295 form a helical membrane-spanning segment; that stretch reads GVGVFMTVINPMLNPLIYSL. Residues 296-315 are Cytoplasmic-facing; that stretch reads RNTDVQGALCQLLVVKRSLT.

The protein belongs to the G-protein coupled receptor 1 family.

It is found in the cell membrane. Functionally, odorant receptor. This Pan troglodytes (Chimpanzee) protein is Olfactory receptor 3A3 (OR3A3).